The following is a 236-amino-acid chain: Purine nucleoside phosphorylase DeoD-type (236 aa).

Residue His-5 participates in a purine D-ribonucleoside binding. Phosphate-binding positions include Gly-21, Arg-25, Arg-44, and 88–91 (RVGS). Residues 180–182 (EME) and 204–205 (SD) each bind a purine D-ribonucleoside. Catalysis depends on Asp-205, which acts as the Proton donor.

Belongs to the PNP/UDP phosphorylase family. Homohexamer; trimer of homodimers.

It catalyses the reaction a purine D-ribonucleoside + phosphate = a purine nucleobase + alpha-D-ribose 1-phosphate. The catalysed reaction is a purine 2'-deoxy-D-ribonucleoside + phosphate = a purine nucleobase + 2-deoxy-alpha-D-ribose 1-phosphate. Its function is as follows. Catalyzes the reversible phosphorolytic breakdown of the N-glycosidic bond in the beta-(deoxy)ribonucleoside molecules, with the formation of the corresponding free purine bases and pentose-1-phosphate. The protein is Purine nucleoside phosphorylase DeoD-type of Psychromonas ingrahamii (strain DSM 17664 / CCUG 51855 / 37).